Here is a 63-residue protein sequence, read N- to C-terminus: MGAGTAPKGKRNRTPTHIRCRRCGRRAFNVKKGYCAACGFGRSRRMRKYSWSHKWKKKRNLSY.

Cys20, Cys23, Cys35, and Cys38 together coordinate Zn(2+). The C4-type zinc finger occupies Cys20–Cys38.

This sequence belongs to the eukaryotic ribosomal protein eL37 family. Zn(2+) is required as a cofactor.

In terms of biological role, binds to the 23S rRNA. The sequence is that of Large ribosomal subunit protein eL37 from Thermococcus gammatolerans (strain DSM 15229 / JCM 11827 / EJ3).